The following is a 287-amino-acid chain: Rhomboid-like protein 18 (287 aa).

The next 6 helical transmembrane spans lie at 10–30 (NAPV…FFGI), 53–73 (LIIS…LYLL), 90–110 (VFIF…LSLT), 117–137 (LLTS…FLDI), 145–165 (VLGV…QLLL), and 172–192 (IFTG…IFGI). A UBA domain is found at 244–284 (EPSEEAIATLVSMGFDQNAARQALVHARNDVNAATNILLEA).

This sequence belongs to the peptidase S54 family.

It localises to the membrane. Probable rhomboid-type serine protease that catalyzes intramembrane proteolysis. In Arabidopsis thaliana (Mouse-ear cress), this protein is Rhomboid-like protein 18.